Reading from the N-terminus, the 506-residue chain is Lysine--tRNA ligase (506 aa).

Residues Glu416 and Glu423 each contribute to the Mg(2+) site.

It belongs to the class-II aminoacyl-tRNA synthetase family. Homodimer. The cofactor is Mg(2+).

The protein resides in the cytoplasm. The enzyme catalyses tRNA(Lys) + L-lysine + ATP = L-lysyl-tRNA(Lys) + AMP + diphosphate. This Sodalis glossinidius (strain morsitans) protein is Lysine--tRNA ligase.